An 842-amino-acid chain; its full sequence is Putative G-type lectin S-receptor-like serine/threonine-protein kinase At1g61610 (842 aa).

The N-terminal stretch at 1–22 (MAGFNRNLTLVTTLLIFHQLCS) is a signal peptide. N-linked (GlcNAc...) asparagine glycosylation is found at N7, N23, N35, N60, N110, N123, N304, N351, and N380. Topologically, residues 23-443 (NVSCSTSNSF…KLGGGKENST (421 aa)) are extracellular. One can recognise a Bulb-type lectin domain in the interval 29 to 150 (SNSFTRNHTI…SDRRKWYWES (122 aa)). Residues 292 to 331 (PSTECEKYNRCGNYSVCDDSKEFDSGKCSCIDGFEPVHQD) enclose the EGF-like domain. Cystine bridges form between C296-C308 and C302-C319. One can recognise a PAN domain in the interval 350–431 (CNQSLVAGQE…GGNSINIRLA (82 aa)). 2 cysteine pairs are disulfide-bonded: C385–C406 and C389–C395. N441 is a glycosylation site (N-linked (GlcNAc...) asparagine). The chain crosses the membrane as a helical span at residues 444–464 (LWIIVFSVIGAFLLGLCIWIL). The Cytoplasmic portion of the chain corresponds to 465–842 (WKFKKSLKAF…DVTFTTIVGR (378 aa)). The region spanning 525–814 (FAEENKLGQG…PRQPTFHSFL (290 aa)) is the Protein kinase domain. Residues 531–539 (LGQGGFGTV) and K553 each bind ATP. S559 is modified (phosphoserine). The interval 614–631 (SKQGSLDWRKRWEVIGGI) is caM-binding. D650 functions as the Proton acceptor in the catalytic mechanism. Residues S654 and S667 each carry the phosphoserine modification. At T684 the chain carries Phosphothreonine. 2 positions are modified to phosphoserine: S728 and S830. The residue at position 837 (T837) is a Phosphothreonine.

This sequence belongs to the protein kinase superfamily. Ser/Thr protein kinase family.

It is found in the cell membrane. The catalysed reaction is L-seryl-[protein] + ATP = O-phospho-L-seryl-[protein] + ADP + H(+). The enzyme catalyses L-threonyl-[protein] + ATP = O-phospho-L-threonyl-[protein] + ADP + H(+). The protein is Putative G-type lectin S-receptor-like serine/threonine-protein kinase At1g61610 of Arabidopsis thaliana (Mouse-ear cress).